The chain runs to 132 residues: Interleukin-4 (132 aa).

The N-terminal stretch at 1 to 24 is a signal peptide; that stretch reads MGLTSQLIPTLVCLLALTSTFVHG. Asn28, Asn45, Asn62, Asn83, Asn95, and Asn101 each carry an N-linked (GlcNAc...) asparagine glycan. Intrachain disulfides connect Cys48/Cys84 and Cys70/Cys104.

This sequence belongs to the IL-4/IL-13 family.

The protein resides in the secreted. Participates in at least several B-cell activation processes as well as of other cell types. It is a costimulator of DNA-synthesis. It induces the expression of class II MHC molecules on resting B-cells. It enhances both secretion and cell surface expression of IgE and IgG1. It also regulates the expression of the low affinity Fc receptor for IgE (CD23) on both lymphocytes and monocytes. Positively regulates IL31RA expression in macrophages. Stimulates autophagy in dendritic cells by interfering with mTORC1 signaling and through the induction of RUFY4. The protein is Interleukin-4 (IL4) of Canis lupus familiaris (Dog).